A 217-amino-acid chain; its full sequence is Probable transaldolase (217 aa).

The active-site Schiff-base intermediate with substrate is the K83.

This sequence belongs to the transaldolase family. Type 3B subfamily.

The protein resides in the cytoplasm. It carries out the reaction D-sedoheptulose 7-phosphate + D-glyceraldehyde 3-phosphate = D-erythrose 4-phosphate + beta-D-fructose 6-phosphate. Its pathway is carbohydrate degradation; pentose phosphate pathway; D-glyceraldehyde 3-phosphate and beta-D-fructose 6-phosphate from D-ribose 5-phosphate and D-xylulose 5-phosphate (non-oxidative stage): step 2/3. Transaldolase is important for the balance of metabolites in the pentose-phosphate pathway. The protein is Probable transaldolase of Caulobacter sp. (strain K31).